A 294-amino-acid polypeptide reads, in one-letter code: Small ribosomal subunit protein uS2 (294 aa).

A disordered region spans residues 254–294 (ESSNTEAPVAETAAAEAPVADAAIEAPVAEEAKTTEADDTK). Positions 259-282 (EAPVAETAAAEAPVADAAIEAPVA) are enriched in low complexity. The segment covering 283–294 (EEAKTTEADDTK) has biased composition (basic and acidic residues).

It belongs to the universal ribosomal protein uS2 family.

The polypeptide is Small ribosomal subunit protein uS2 (Renibacterium salmoninarum (strain ATCC 33209 / DSM 20767 / JCM 11484 / NBRC 15589 / NCIMB 2235)).